The sequence spans 500 residues: Probable cytosol aminopeptidase (500 aa).

The Mn(2+) site is built by Lys265 and Asp270. Lys277 is an active-site residue. Residues Asp288, Asp347, and Glu349 each contribute to the Mn(2+) site. Arg351 is an active-site residue.

This sequence belongs to the peptidase M17 family. Requires Mn(2+) as cofactor.

It is found in the cytoplasm. The catalysed reaction is Release of an N-terminal amino acid, Xaa-|-Yaa-, in which Xaa is preferably Leu, but may be other amino acids including Pro although not Arg or Lys, and Yaa may be Pro. Amino acid amides and methyl esters are also readily hydrolyzed, but rates on arylamides are exceedingly low.. It carries out the reaction Release of an N-terminal amino acid, preferentially leucine, but not glutamic or aspartic acids.. In terms of biological role, presumably involved in the processing and regular turnover of intracellular proteins. Catalyzes the removal of unsubstituted N-terminal amino acids from various peptides. The protein is Probable cytosol aminopeptidase of Rickettsia peacockii (strain Rustic).